The following is an 86-amino-acid chain: Mu-theraphotoxin-Cg2a 3 (86 aa).

The N-terminal stretch at 1-21 (MKVSVVITLAVLGVMFVWASA) is a signal peptide. Positions 22–50 (AELKERGSDQRDSPAWIKSMERIFQSEER) are excised as a propeptide. 3 disulfides stabilise this stretch: Cys-52–Cys-66, Cys-59–Cys-71, and Cys-65–Cys-78. Phe-84 bears the Phenylalanine amide mark.

This sequence belongs to the neurotoxin 10 (Hwtx-1) family. 37 (Jztx-31) subfamily. In terms of tissue distribution, expressed by the venom gland.

The protein localises to the secreted. Its function is as follows. Inhibits both peak current and fast inactivation of voltage-gated sodium channels (Nav) channels. Inhibits the inactivation of Nav on DRG neurons (EC(50)=1.77 uM) and peak current of cardiac myocytes (IC(50)=0.90 uM). The protein is Mu-theraphotoxin-Cg2a 3 of Chilobrachys guangxiensis (Chinese earth tiger tarantula).